The following is a 287-amino-acid chain: U-megalopygitoxin(8)-Mc8 (287 aa).

Positions 1 to 17 (MYLQYLVLSLFSTTVYG) are cleaved as a signal peptide.

It belongs to the caterpillar 8 family. Contains 2 disulfide bonds. As to expression, expressed by the venom apparatus.

The protein resides in the secreted. Probable toxin. This is U-megalopygitoxin(8)-Mc8 from Megalopyge crispata (Black-waved flannel moth).